Here is a 501-residue protein sequence, read N- to C-terminus: Aspartyl/glutamyl-tRNA(Asn/Gln) amidotransferase subunit B (501 aa).

The interval 276-299 is disordered; it reads HYQEADGSTSKGRPKETAEDYRYF. Residues 288–299 show a composition bias toward basic and acidic residues; it reads RPKETAEDYRYF.

This sequence belongs to the GatB/GatE family. GatB subfamily. Heterotrimer of A, B and C subunits.

It carries out the reaction L-glutamyl-tRNA(Gln) + L-glutamine + ATP + H2O = L-glutaminyl-tRNA(Gln) + L-glutamate + ADP + phosphate + H(+). The enzyme catalyses L-aspartyl-tRNA(Asn) + L-glutamine + ATP + H2O = L-asparaginyl-tRNA(Asn) + L-glutamate + ADP + phosphate + 2 H(+). In terms of biological role, allows the formation of correctly charged Asn-tRNA(Asn) or Gln-tRNA(Gln) through the transamidation of misacylated Asp-tRNA(Asn) or Glu-tRNA(Gln) in organisms which lack either or both of asparaginyl-tRNA or glutaminyl-tRNA synthetases. The reaction takes place in the presence of glutamine and ATP through an activated phospho-Asp-tRNA(Asn) or phospho-Glu-tRNA(Gln). This is Aspartyl/glutamyl-tRNA(Asn/Gln) amidotransferase subunit B from Corynebacterium glutamicum (strain R).